The sequence spans 254 residues: Ribonuclease PH (254 aa).

Residues Arg86 and 124-126 (GTR) each bind phosphate.

This sequence belongs to the RNase PH family. In terms of assembly, homohexameric ring arranged as a trimer of dimers.

The enzyme catalyses tRNA(n+1) + phosphate = tRNA(n) + a ribonucleoside 5'-diphosphate. Phosphorolytic 3'-5' exoribonuclease that plays an important role in tRNA 3'-end maturation. Removes nucleotide residues following the 3'-CCA terminus of tRNAs; can also add nucleotides to the ends of RNA molecules by using nucleoside diphosphates as substrates, but this may not be physiologically important. Probably plays a role in initiation of 16S rRNA degradation (leading to ribosome degradation) during starvation. The polypeptide is Ribonuclease PH (Carboxydothermus hydrogenoformans (strain ATCC BAA-161 / DSM 6008 / Z-2901)).